The following is a 103-amino-acid chain: Small ribosomal subunit protein uS10 (103 aa).

It belongs to the universal ribosomal protein uS10 family. In terms of assembly, part of the 30S ribosomal subunit.

Involved in the binding of tRNA to the ribosomes. The chain is Small ribosomal subunit protein uS10 from Shewanella halifaxensis (strain HAW-EB4).